Reading from the N-terminus, the 181-residue chain is SAGA-associated factor 11 (181 aa).

The SGF11-type zinc-finger motif lies at Phe-93 to Cys-114. A compositionally biased stretch (basic residues) spans Gly-116–Thr-125. The interval Gly-116–Asp-181 is disordered. Low complexity predominate over residues Thr-126 to Ser-153.

Belongs to the SGF11 family. As to quaternary structure, component of a deubiquitination module (DUB module) formed by ENY2, SGF11, and UBP22 in Arabidopsis. Interacts directly with ENY2 and UBP22. Interacts with DDA1. Post-translationally, ubiquitinated in DET1-dependent manner. Ubiquitination probably leads to its subsequent proteasomal degradation.

Its subcellular location is the nucleus. It localises to the nucleoplasm. Functionally, component of a deubiquitination module (DUB module) that specifically deubiquinates monoubiquinated histone H2B (H2Bub). Does not seem to be a component of the TREX-2 complex. Seems to act independently of the SAGA multiprotein complex. The DUB module is responsible for the major H2Bub deubiquitinase activity in Arabidopsis. The polypeptide is SAGA-associated factor 11 (Arabidopsis thaliana (Mouse-ear cress)).